Consider the following 57-residue polypeptide: UPF0391 membrane protein RHECIAT_CH0003936 (57 aa).

Transmembrane regions (helical) follow at residues 4 to 24 (WALI…SGVS) and 33 to 53 (VLFG…LMAG).

The protein belongs to the UPF0391 family.

It is found in the cell membrane. In Rhizobium etli (strain CIAT 652), this protein is UPF0391 membrane protein RHECIAT_CH0003936.